A 250-amino-acid chain; its full sequence is UDP-2,3-diacylglucosamine hydrolase (250 aa).

Residues aspartate 8, histidine 10, aspartate 41, asparagine 79, and histidine 114 each coordinate Mn(2+). 79-80 (NR) is a substrate binding site. Aspartate 122, serine 160, aspartate 172, glutamine 175, and histidine 203 together coordinate substrate. The Mn(2+) site is built by histidine 203 and histidine 205.

The protein belongs to the LpxH family. Mn(2+) is required as a cofactor.

The protein resides in the cell inner membrane. It carries out the reaction UDP-2-N,3-O-bis[(3R)-3-hydroxytetradecanoyl]-alpha-D-glucosamine + H2O = 2-N,3-O-bis[(3R)-3-hydroxytetradecanoyl]-alpha-D-glucosaminyl 1-phosphate + UMP + 2 H(+). The protein operates within glycolipid biosynthesis; lipid IV(A) biosynthesis; lipid IV(A) from (3R)-3-hydroxytetradecanoyl-[acyl-carrier-protein] and UDP-N-acetyl-alpha-D-glucosamine: step 4/6. In terms of biological role, hydrolyzes the pyrophosphate bond of UDP-2,3-diacylglucosamine to yield 2,3-diacylglucosamine 1-phosphate (lipid X) and UMP by catalyzing the attack of water at the alpha-P atom. Involved in the biosynthesis of lipid A, a phosphorylated glycolipid that anchors the lipopolysaccharide to the outer membrane of the cell. This is UDP-2,3-diacylglucosamine hydrolase from Xylella fastidiosa (strain M23).